Here is a 287-residue protein sequence, read N- to C-terminus: Phosphatidylserine decarboxylase proenzyme (287 aa).

Active-site charge relay system; for autoendoproteolytic cleavage activity residues include aspartate 90, histidine 147, and serine 253. Serine 253 functions as the Schiff-base intermediate with substrate; via pyruvic acid; for decarboxylase activity in the catalytic mechanism. Pyruvic acid (Ser); by autocatalysis is present on serine 253.

Belongs to the phosphatidylserine decarboxylase family. PSD-B subfamily. Prokaryotic type I sub-subfamily. Heterodimer of a large membrane-associated beta subunit and a small pyruvoyl-containing alpha subunit. The cofactor is pyruvate. Post-translationally, is synthesized initially as an inactive proenzyme. Formation of the active enzyme involves a self-maturation process in which the active site pyruvoyl group is generated from an internal serine residue via an autocatalytic post-translational modification. Two non-identical subunits are generated from the proenzyme in this reaction, and the pyruvate is formed at the N-terminus of the alpha chain, which is derived from the carboxyl end of the proenzyme. The autoendoproteolytic cleavage occurs by a canonical serine protease mechanism, in which the side chain hydroxyl group of the serine supplies its oxygen atom to form the C-terminus of the beta chain, while the remainder of the serine residue undergoes an oxidative deamination to produce ammonia and the pyruvoyl prosthetic group on the alpha chain. During this reaction, the Ser that is part of the protease active site of the proenzyme becomes the pyruvoyl prosthetic group, which constitutes an essential element of the active site of the mature decarboxylase.

The protein resides in the cell membrane. The catalysed reaction is a 1,2-diacyl-sn-glycero-3-phospho-L-serine + H(+) = a 1,2-diacyl-sn-glycero-3-phosphoethanolamine + CO2. The protein operates within phospholipid metabolism; phosphatidylethanolamine biosynthesis; phosphatidylethanolamine from CDP-diacylglycerol: step 2/2. Catalyzes the formation of phosphatidylethanolamine (PtdEtn) from phosphatidylserine (PtdSer). The polypeptide is Phosphatidylserine decarboxylase proenzyme (Aliivibrio fischeri (strain MJ11) (Vibrio fischeri)).